The primary structure comprises 41 residues: Large ribosomal subunit protein bL36 (41 aa).

This sequence belongs to the bacterial ribosomal protein bL36 family.

The chain is Large ribosomal subunit protein bL36 from Sinorhizobium fredii (strain NBRC 101917 / NGR234).